A 286-amino-acid polypeptide reads, in one-letter code: Nucleotide-binding protein HAPS_0087 (286 aa).

G8–S15 is an ATP binding site. D56–N59 is a GTP binding site.

The protein belongs to the RapZ-like family.

Its function is as follows. Displays ATPase and GTPase activities. The sequence is that of Nucleotide-binding protein HAPS_0087 from Glaesserella parasuis serovar 5 (strain SH0165) (Haemophilus parasuis).